Consider the following 223-residue polypeptide: Type 3 secretion system stator protein (223 aa).

Belongs to the SctL stator family. In terms of assembly, the core secretion machinery of the T3SS is composed of approximately 20 different proteins, including cytoplasmic components, a base, an export apparatus and a needle. This subunit is part of the cytosolic complex. Interacts directly with YscN/SctN (T3SS ATPase) and YscQ/SctQ (the major sorting platform component). Forms homodimers.

The protein resides in the cytoplasm. Its function is as follows. Component of the type III secretion system (T3SS), also called injectisome, which is used to inject bacterial effector proteins into eukaryotic host cells. Acts as a regulator of the YscN/SctN ATPase activity. Overexpression of YscL/SctL abolishes type III secretion and down-regulates the expression of secretion apparatus components. This Yersinia enterocolitica protein is Type 3 secretion system stator protein.